The chain runs to 800 residues: Fibroblast growth factor receptor 3 (800 aa).

Residues 1–20 (MVPLCLLLYLATLVFPPVYS) form the signal peptide. Residues 21–122 (AHLLSPEPTD…YTVKVIDSLS (102 aa)) form the Ig-like C2-type 1 domain. At 21 to 363 (AHLLSPEPTD…EMEREDDYAD (343 aa)) the chain is on the extracellular side. The cysteines at positions 55 and 101 are disulfide-linked. N-linked (GlcNAc...) asparagine glycans are attached at residues Asn-77, Asn-90, and Asn-112. Positions 124 to 136 (GDDEDYDEDEDEA) are enriched in acidic residues. The segment at 124–143 (GDDEDYDEDEDEAGNGNAEA) is disordered. 2 Ig-like C2-type domains span residues 144 to 237 (PYWT…YQLD) and 246 to 348 (PILQ…AWLT). Cys-169 and Cys-221 form a disulfide bridge. Asn-218, Asn-255, Asn-287, Asn-308, and Asn-321 each carry an N-linked (GlcNAc...) asparagine glycan. Cys-268 and Cys-332 are joined by a disulfide. A helical transmembrane segment spans residues 364 to 384 (ILIYVTSCVLFILTMVIIILC). At 385 to 800 (RMWINTQKTL…HHHSNGVIRT (416 aa)) the chain is on the cytoplasmic side. One can recognise a Protein kinase domain in the interval 460-739 (LTLGKPLGEG…RQLVEDHDRV (280 aa)). Residues 466–474 (LGEGCFGQV) and Lys-496 contribute to the ATP site. Asp-605 acts as the Proton acceptor in catalysis. 4 positions are modified to phosphotyrosine; by autocatalysis: Tyr-635, Tyr-636, Tyr-712, and Tyr-748. A compositionally biased stretch (polar residues) spans 764 to 773 (DSNSTCSSGD). Residues 764 to 800 (DSNSTCSSGDDSVFAHDPLPEEPCLPKHHHSNGVIRT) form a disordered region.

The protein belongs to the protein kinase superfamily. Tyr protein kinase family. Fibroblast growth factor receptor subfamily. As to quaternary structure, monomer. Homodimer after ligand binding. In terms of processing, autophosphorylated. Binding of FGF family members together with heparan sulfate proteoglycan or heparin promotes receptor dimerization and autophosphorylation on tyrosine residues. Autophosphorylation occurs in trans between the two FGFR molecules present in the dimer.

The protein localises to the cell membrane. It carries out the reaction L-tyrosyl-[protein] + ATP = O-phospho-L-tyrosyl-[protein] + ADP + H(+). Present in an inactive conformation in the absence of bound ligand. Ligand binding leads to dimerization and activation by autophosphorylation on tyrosine residues. Tyrosine-protein kinase that acts as a cell-surface receptor for fibroblast growth factors and plays an essential role in the regulation of cell proliferation, differentiation and apoptosis. Plays an essential role in the regulation of chondrocyte differentiation, proliferation and apoptosis, and is required for normal skeleton development. Regulates both osteogenesis and postnatal bone mineralization by osteoblasts. Promotes apoptosis in chondrocytes, but can also promote cancer cell proliferation. Phosphorylates PLCG1, CBL and FRS2. Ligand binding leads to the activation of several signaling cascades. Activation of PLCG1 leads to the production of the cellular signaling molecules diacylglycerol and inositol 1,4,5-trisphosphate. Phosphorylation of FRS2 triggers recruitment of GRB2, GAB1, PIK3R1 and SOS1, and mediates activation of RAS, MAPK1/ERK2, MAPK3/ERK1 and the MAP kinase signaling pathway, as well as of the AKT1 signaling pathway. The sequence is that of Fibroblast growth factor receptor 3 (fgfr3) from Danio rerio (Zebrafish).